The chain runs to 475 residues: Glutamyl-tRNA(Gln) amidotransferase subunit A (475 aa).

Residues lysine 76 and serine 151 each act as charge relay system in the active site. Catalysis depends on serine 175, which acts as the Acyl-ester intermediate.

Belongs to the amidase family. GatA subfamily. In terms of assembly, heterotrimer of A, B and C subunits.

The enzyme catalyses L-glutamyl-tRNA(Gln) + L-glutamine + ATP + H2O = L-glutaminyl-tRNA(Gln) + L-glutamate + ADP + phosphate + H(+). Functionally, allows the formation of correctly charged Gln-tRNA(Gln) through the transamidation of misacylated Glu-tRNA(Gln) in organisms which lack glutaminyl-tRNA synthetase. The reaction takes place in the presence of glutamine and ATP through an activated gamma-phospho-Glu-tRNA(Gln). The polypeptide is Glutamyl-tRNA(Gln) amidotransferase subunit A (Pelodictyon phaeoclathratiforme (strain DSM 5477 / BU-1)).